Reading from the N-terminus, the 344-residue chain is Meiotic recombination protein DMC1 homolog A (344 aa).

133-140 (GEFRSGKT) serves as a coordination point for ATP. R235 contributes to the dsDNA binding site. SsDNA-binding residues include R235, F238, R241, R247, and R315. Positions 241 and 247 each coordinate dsDNA.

This sequence belongs to the RecA family. DMC1 subfamily. Expressed in pollen mother cells and root tips.

It is found in the nucleus. Functionally, recombinase that may participate in meiotic recombination, specifically in homologous strand assimilation, which is required for the resolution of meiotic double-strand breaks. Exhibits DNA-dependent ATPase activity when bound to single-stranded DNA (ssDNA). Mediates renaturation of homologous complementary strands as well as assimilation of single strands into homologous supercoiled duplexes leading to D-loop formation. Binds circular single-stranded DNA (ssDNA) and circular double-stranded DNA (dsDNA) in vitro. Catalyzes DNA homologous renaturation and DNA strand exchange. The rates of these activities are dependent on the state of ATP hydrolysis. Forms helical filaments along ssDNA and dsDNA, and promotes strand exchange between ssDNA and dsDNA with long DNA substrates of several thousand base pairs. The presence of the replication protein A is not required for this activity. Seems to be required for homologous pairing and subsequent chromosome segregation during male meiosis. May be not directly required for homologous pairing during male meiosis. Required for synaptonemal complex assembly and crossover formation. Functions redundantly with DMC1B. The sequence is that of Meiotic recombination protein DMC1 homolog A from Oryza sativa subsp. indica (Rice).